A 301-amino-acid polypeptide reads, in one-letter code: Ubiquitin thioesterase OTU1 (301 aa).

The UBX-like stretch occupies residues 4–80 (KVTGAGINQV…TIESSDSNES (77 aa)). The 121-residue stretch at 109–229 (LSVHPVLDDN…GIHYDSLTMN (121 aa)) folds into the OTU domain. Positions 114–120 (VLDDNSC) are cys-loop. Residue D117 is part of the active site. The Nucleophile role is filled by C120. A Glycyl lysine isopeptide (Lys-Gly) (interchain with G-Cter in ubiquitin) cross-link involves residue K160. The segment at 169–179 (ILKMESWGGAI) is variable-loop. Positions 218–222 (FNGIH) are his-loop. I221 contributes to the substrate binding site. H222 is an active-site residue. The interval 243 to 248 (DDVLTA) is S2 site. The segment at 270 to 294 (IKCNTCQMTFVGEREVARHAESTGH) adopts a C2H2-type zinc-finger fold. H294 is an active-site residue.

In terms of assembly, forms a complex composed of CDC48, NPL4, UFD1, DOA1, SHP1 and deubiquitinase OTU1; within the complex interacts with CDC48 and DOA1/UFD3.

It localises to the cytoplasm. The protein localises to the nucleus. It carries out the reaction Thiol-dependent hydrolysis of ester, thioester, amide, peptide and isopeptide bonds formed by the C-terminal Gly of ubiquitin (a 76-residue protein attached to proteins as an intracellular targeting signal).. Functionally, hydrolase that can remove conjugated ubiquitin from proteins and may therefore play an important regulatory role at the level of protein turnover by preventing degradation. Participates in the regulation of the ubiquitin conjugation pathway involving CDC48 by hindering multiubiquitination of substrates at the CDC48 chaperone. May be indirectly involved in PIS1 gene expression. The sequence is that of Ubiquitin thioesterase OTU1 (OTU1) from Saccharomyces cerevisiae (strain ATCC 204508 / S288c) (Baker's yeast).